We begin with the raw amino-acid sequence, 129 residues long: Large ribosomal subunit protein bL19 (129 aa).

Functionally, this protein is located at the 30S-50S ribosomal subunit interface and may play a role in the structure and function of the aminoacyl-tRNA binding site. This is Large ribosomal subunit protein bL19 from Rhodopseudomonas palustris (strain ATCC BAA-98 / CGA009).